The primary structure comprises 820 residues: DNA mismatch repair protein MutS (820 aa).

618–625 (GPNMAGKS) provides a ligand contact to ATP.

This sequence belongs to the DNA mismatch repair MutS family.

Its function is as follows. This protein is involved in the repair of mismatches in DNA. It is possible that it carries out the mismatch recognition step. This protein has a weak ATPase activity. This chain is DNA mismatch repair protein MutS, found in Chlamydia trachomatis serovar A (strain ATCC VR-571B / DSM 19440 / HAR-13).